The chain runs to 368 residues: MTATAESKQRSFPKIEFTDSEAGALEFPSSRSRTFTYYTPAKKRSTMYEDVTVDVQPDPDRHLSQGWIYGFGDGPGGYPQEWTAAKSSNWHAFLDPNEEWDQTIYRNNSKVVHQVELCLSNAKRARVYDGWNTPWLTFISRNLGAWMHAENGLALHVFTSIQRSCPTNMINTAVAVNAAHKMRFAQDLALFNLDLSEATENFDGTAHKEVWQSAPEWQPTREVVERLTAVPDWCELLFGSNIVFEQLVGTLFRSELVMQIAAGNGDYITPTIVGTGEHDYDRDLAYTRNLFRLLTRDPEHGEANKELFGTWLAIWVPRCLDAARALQPIWSQPADKAITFATSFDAATDKFRSLLEDLGLDIPKELDQ.

This sequence belongs to the TmoE/XamoE family. The propane 2-monooxygenase multicomponent enzyme system is composed of an electron transfer component and a monooxygenase component interacting with the effector protein PrmD. The electron transfer component is composed of a reductase (PrmB), and the monooxygenase component is formed by a large subunit (PrmA) and a small subunit (PrmC). Probably requires the presence of the chaperonin-like protein PrmG to ensure a productive folding, resulting of a soluble PrmC, which leads to the active form of PrmABCD.

The catalysed reaction is propane + NADH + O2 + H(+) = propan-2-ol + NAD(+) + H2O. Functionally, component of the propane 2-monooxygenase multicomponent enzyme system which is involved in the degradation of propane via the O2-dependent hydroxylation of propane. Also able to catalyze the oxidation the water contaminant N-nitrosodimethylamine (NDMA). This is Propane 2-monooxygenase, hydroxylase component small subunit from Rhodococcus jostii (strain RHA1).